The following is a 386-amino-acid chain: 8-amino-7-oxononanoate synthase (386 aa).

Residue R31 coordinates substrate. 109–110 (GY) lines the pyridoxal 5'-phosphate pocket. H134 is a binding site for substrate. Residues S180, 205 to 208 (DEAH), and 236 to 239 (TLSK) each bind pyridoxal 5'-phosphate. N6-(pyridoxal phosphate)lysine is present on K239. Position 349 (T349) interacts with substrate.

The protein belongs to the class-II pyridoxal-phosphate-dependent aminotransferase family. BioF subfamily. In terms of assembly, homodimer. It depends on pyridoxal 5'-phosphate as a cofactor.

It catalyses the reaction 6-carboxyhexanoyl-[ACP] + L-alanine + H(+) = (8S)-8-amino-7-oxononanoate + holo-[ACP] + CO2. The protein operates within cofactor biosynthesis; biotin biosynthesis. Its function is as follows. Catalyzes the decarboxylative condensation of pimeloyl-[acyl-carrier protein] and L-alanine to produce 8-amino-7-oxononanoate (AON), [acyl-carrier protein], and carbon dioxide. This chain is 8-amino-7-oxononanoate synthase, found in Mycobacterium bovis (strain ATCC BAA-935 / AF2122/97).